We begin with the raw amino-acid sequence, 61 residues long: UPF0370 protein SG1720 (61 aa).

The helical transmembrane segment at 3 to 23 (WLADYWWVVLLVLAGMLIGGV) threads the bilayer. Residues 37 to 47 (NRPELPPHRDN) show a composition bias toward basic and acidic residues. The tract at residues 37–61 (NRPELPPHRDNNAQWDEEDDWPKKP) is disordered. Acidic residues predominate over residues 51 to 61 (WDEEDDWPKKP).

It belongs to the UPF0370 family.

The protein localises to the cell membrane. This chain is UPF0370 protein SG1720, found in Sodalis glossinidius (strain morsitans).